A 216-amino-acid polypeptide reads, in one-letter code: Orotate phosphoribosyltransferase (216 aa).

A 5-phospho-alpha-D-ribose 1-diphosphate-binding site is contributed by K30. 38-39 (FF) serves as a coordination point for orotate. 5-phospho-alpha-D-ribose 1-diphosphate is bound by residues 75–76 (YK), R102, K103, K106, H108, and 128–136 (DDVITAGTA). Orotate contacts are provided by T132 and R160.

It belongs to the purine/pyrimidine phosphoribosyltransferase family. PyrE subfamily. Homodimer. Requires Mg(2+) as cofactor.

It carries out the reaction orotidine 5'-phosphate + diphosphate = orotate + 5-phospho-alpha-D-ribose 1-diphosphate. The protein operates within pyrimidine metabolism; UMP biosynthesis via de novo pathway; UMP from orotate: step 1/2. Functionally, catalyzes the transfer of a ribosyl phosphate group from 5-phosphoribose 1-diphosphate to orotate, leading to the formation of orotidine monophosphate (OMP). The polypeptide is Orotate phosphoribosyltransferase (Acinetobacter baumannii (strain ATCC 17978 / DSM 105126 / CIP 53.77 / LMG 1025 / NCDC KC755 / 5377)).